The sequence spans 378 residues: Branched-chain-amino-acid aminotransferase (378 aa).

Lys213 is modified (N6-(pyridoxal phosphate)lysine).

Belongs to the class-IV pyridoxal-phosphate-dependent aminotransferase family. Homodimer. The cofactor is pyridoxal 5'-phosphate.

The enzyme catalyses L-leucine + 2-oxoglutarate = 4-methyl-2-oxopentanoate + L-glutamate. It carries out the reaction L-isoleucine + 2-oxoglutarate = (S)-3-methyl-2-oxopentanoate + L-glutamate. The catalysed reaction is L-valine + 2-oxoglutarate = 3-methyl-2-oxobutanoate + L-glutamate. In terms of biological role, catalyzes the first reaction in the catabolism of the essential branched chain amino acids leucine, isoleucine, and valine. This is Branched-chain-amino-acid aminotransferase (bcaA) from Dictyostelium discoideum (Social amoeba).